The chain runs to 712 residues: DNA ligase (712 aa).

Low complexity predominate over residues 1 to 22 (MSTQYDSDSSPAASNSGSADPA). The disordered stretch occupies residues 1–23 (MSTQYDSDSSPAASNSGSADPAL). An NAD(+)-binding site is contributed by 53 to 57 (DAEFD). The disordered stretch occupies residues 69–93 (SHPEAVTGPSPTTEVAPSPPESSPF). NAD(+) is bound by residues 104–105 (SL) and glutamate 129. Lysine 131 serves as the catalytic N6-AMP-lysine intermediate. NAD(+) is bound by residues arginine 152, glutamate 192, lysine 308, and lysine 332. Residues cysteine 426, cysteine 429, cysteine 445, and cysteine 451 each coordinate Zn(2+). The BRCT domain occupies 624–712 (IQADLLAGLS…GPGKGDAEED (89 aa)).

The protein belongs to the NAD-dependent DNA ligase family. LigA subfamily. Mg(2+) serves as cofactor. It depends on Mn(2+) as a cofactor.

It carries out the reaction NAD(+) + (deoxyribonucleotide)n-3'-hydroxyl + 5'-phospho-(deoxyribonucleotide)m = (deoxyribonucleotide)n+m + AMP + beta-nicotinamide D-nucleotide.. Its function is as follows. DNA ligase that catalyzes the formation of phosphodiester linkages between 5'-phosphoryl and 3'-hydroxyl groups in double-stranded DNA using NAD as a coenzyme and as the energy source for the reaction. It is essential for DNA replication and repair of damaged DNA. The sequence is that of DNA ligase from Corynebacterium urealyticum (strain ATCC 43042 / DSM 7109).